The chain runs to 259 residues: Flagellar L-ring protein 1 (259 aa).

A signal peptide spans 1–15 (MKRICLLALITTMSG). The N-palmitoyl cysteine moiety is linked to residue Cys16. Cys16 is lipidated: S-diacylglycerol cysteine. The interval 38-63 (EGDKSKDESSGIVDTLRGRNDPVAGD) is disordered.

This sequence belongs to the FlgH family. As to quaternary structure, the basal body constitutes a major portion of the flagellar organelle and consists of four rings (L,P,S, and M) mounted on a central rod.

The protein localises to the cell outer membrane. The protein resides in the bacterial flagellum basal body. In terms of biological role, assembles around the rod to form the L-ring and probably protects the motor/basal body from shearing forces during rotation. This is Flagellar L-ring protein 1 (flgH1) from Vibrio parahaemolyticus serotype O3:K6 (strain RIMD 2210633).